Consider the following 457-residue polypeptide: Glucuronide carrier protein homolog (457 aa).

Topologically, residues 1-11 are cytoplasmic; sequence MNQQLSWRTIV. The helical transmembrane segment at 12–34 threads the bilayer; it reads GYSLGDVANNFAFAMGALFLLSY. Residues 35–37 are Periplasmic-facing; the sequence is YTD. Residues 38-60 traverse the membrane as a helical segment; that stretch reads VAGVGAAAAGTMLLLVRVFDAFA. The Cytoplasmic segment spans residues 61–79; the sequence is DVFAGRVVDSVNTRWGKFR. A helical transmembrane segment spans residues 80-100; it reads PFLLFGTAPLMIFSVLVFWVL. Topologically, residues 101–108 are periplasmic; it reads TDWSHGSK. A helical membrane pass occupies residues 109–129; it reads VVYAYLTYMGLGLCYSLVNIP. Topologically, residues 130 to 146 are cytoplasmic; it reads YGSLATAMTQQPQSRAR. The helical transmembrane segment at 147 to 167 threads the bilayer; it reads LGAARGIAASLTFVCLAFLIG. The Periplasmic segment spans residues 168-180; that stretch reads PSIKNSSPEEMVS. Residues 181-201 form a helical membrane-spanning segment; sequence VYHFWTIVLAIAGMVLYFICF. Residues 202–228 are Cytoplasmic-facing; sequence KSTRENVVRIVAQPSLNISLQTLKRNR. The helical transmembrane segment at 229-249 threads the bilayer; that stretch reads PLFMLCIGALCVLISTFAVSA. At 250-263 the chain is on the periplasmic side; it reads SSLFYVRYVLNDTG. Residues 264–284 form a helical membrane-spanning segment; that stretch reads LFTVLVLVQNLVGTVASAPLV. The Cytoplasmic portion of the chain corresponds to 285-296; that stretch reads PGMVARIGKKNT. A helical transmembrane segment spans residues 297–316; sequence FLIGALLGTCGYLLFFWVSV. The Periplasmic segment spans residues 317 to 320; the sequence is WSLP. The helical transmembrane segment at 321–343 threads the bilayer; the sequence is VALVALAIASIGQGVTMTVMWAL. The Cytoplasmic portion of the chain corresponds to 344-372; it reads EADTVEYGEYLTGVRIEGLTYSLFSFTRK. The chain crosses the membrane as a helical span at residues 373 to 393; sequence CGQAIGGSIPAFILGLSGYIA. Over 394-408 the chain is Periplasmic; the sequence is NQVQTPEVIMGIRTS. The helical transmembrane segment at 409–429 threads the bilayer; sequence IALVPCGFMLLAFVIIWFYPL. Over 430–457 the chain is Cytoplasmic; sequence TDKKFKEIVVEIDNRKKVQQQLISDITN.

This sequence belongs to the sodium:galactoside symporter (TC 2.A.2) family.

It localises to the cell inner membrane. The sequence is that of Glucuronide carrier protein homolog (uidB) from Escherichia coli (strain K12).